Consider the following 325-residue polypeptide: Transcription initiation factor IIB 2 (325 aa).

The span at 1–13 (MSDSTIRTYSSDQ) shows a compositional bias: polar residues. Residues 1-29 (MSDSTIRTYSSDQRQTDNDETVSTPDEDV) are disordered. A TFIIB-type zinc finger spans residues 28-58 (DVLTCPECGGQVIDDEEHGESVCVDCGLVVE). The Zn(2+) site is built by C32, C35, C50, and C53. A disordered region spans residues 73-93 (STEKDEKSRVGAPTTNMMHDK). A run of 2 repeats spans residues 144–227 (GEIE…VREL) and 238–319 (QYVP…ELLE).

It belongs to the TFIIB family.

Stabilizes TBP binding to an archaeal box-A promoter. Also responsible for recruiting RNA polymerase II to the pre-initiation complex (DNA-TBP-TFIIB). This Halobacterium salinarum (strain ATCC 700922 / JCM 11081 / NRC-1) (Halobacterium halobium) protein is Transcription initiation factor IIB 2.